The primary structure comprises 507 residues: Cyclin-dependent kinase-like 2 (507 aa).

The region spanning 4-289 (YENLGLVGEG…CADLLHHDFF (286 aa)) is the Protein kinase domain. ATP contacts are provided by residues 10-18 (VGEGSYGMV) and Lys-33. The [NKR]KIAxRE motif lies at 45-51 (KKIAMRE). Asp-126 serves as the catalytic Proton acceptor. The interval 365 to 392 (KTEKGTRASNGSCLHDNGTSHKGLSSTS) is disordered.

The protein belongs to the protein kinase superfamily. CMGC Ser/Thr protein kinase family. CDC2/CDKX subfamily.

It is found in the cytoplasm. It localises to the nucleus. The catalysed reaction is L-seryl-[protein] + ATP = O-phospho-L-seryl-[protein] + ADP + H(+). It catalyses the reaction L-threonyl-[protein] + ATP = O-phospho-L-threonyl-[protein] + ADP + H(+). This is Cyclin-dependent kinase-like 2 from Rattus norvegicus (Rat).